The following is a 326-amino-acid chain: Beta-ketoacyl-[acyl-carrier-protein] synthase III (326 aa).

Active-site residues include C112 and H251. The tract at residues Q252–R256 is ACP-binding. The active site involves N281.

This sequence belongs to the thiolase-like superfamily. FabH family. As to quaternary structure, homodimer.

It localises to the cytoplasm. The catalysed reaction is malonyl-[ACP] + acetyl-CoA + H(+) = 3-oxobutanoyl-[ACP] + CO2 + CoA. It participates in lipid metabolism; fatty acid biosynthesis. In terms of biological role, catalyzes the condensation reaction of fatty acid synthesis by the addition to an acyl acceptor of two carbons from malonyl-ACP. Catalyzes the first condensation reaction which initiates fatty acid synthesis and may therefore play a role in governing the total rate of fatty acid production. Possesses both acetoacetyl-ACP synthase and acetyl transacylase activities. Its substrate specificity determines the biosynthesis of branched-chain and/or straight-chain of fatty acids. The protein is Beta-ketoacyl-[acyl-carrier-protein] synthase III of Clostridium botulinum (strain Okra / Type B1).